We begin with the raw amino-acid sequence, 140 residues long: Large ribosomal subunit protein uL14 (140 aa).

Belongs to the universal ribosomal protein uL14 family.

The polypeptide is Large ribosomal subunit protein uL14 (RpL23) (Drosophila melanogaster (Fruit fly)).